Here is a 146-residue protein sequence, read N- to C-terminus: Acireductone dioxygenase (146 aa).

Fe(2+) contacts are provided by His-71, His-73, Glu-77, and His-116. 4 residues coordinate Ni(2+): His-71, His-73, Glu-77, and His-116.

This sequence belongs to the acireductone dioxygenase (ARD) family. Requires Fe(2+) as cofactor. It depends on Ni(2+) as a cofactor.

The protein resides in the cytoplasm. It localises to the nucleus. It carries out the reaction 1,2-dihydroxy-5-(methylsulfanyl)pent-1-en-3-one + O2 = 4-methylsulfanyl-2-oxobutanoate + formate + 2 H(+). The enzyme catalyses 1,2-dihydroxy-5-(methylsulfanyl)pent-1-en-3-one + O2 = 3-(methylsulfanyl)propanoate + CO + formate + 2 H(+). It functions in the pathway amino-acid biosynthesis; L-methionine biosynthesis via salvage pathway; L-methionine from S-methyl-5-thio-alpha-D-ribose 1-phosphate: step 5/6. In terms of biological role, catalyzes 2 different reactions between oxygen and the acireductone 1,2-dihydroxy-3-keto-5-methylthiopentene (DHK-MTPene) depending upon the metal bound in the active site. Fe-containing acireductone dioxygenase (Fe-ARD) produces formate and 2-keto-4-methylthiobutyrate (KMTB), the alpha-ketoacid precursor of methionine in the methionine recycle pathway. Ni-containing acireductone dioxygenase (Ni-ARD) produces methylthiopropionate, carbon monoxide and formate, and does not lie on the methionine recycle pathway. In Heterostelium pallidum (strain ATCC 26659 / Pp 5 / PN500) (Cellular slime mold), this protein is Acireductone dioxygenase.